We begin with the raw amino-acid sequence, 509 residues long: Maturase K (509 aa).

Belongs to the intron maturase 2 family. MatK subfamily.

It is found in the plastid. It localises to the chloroplast. In terms of biological role, usually encoded in the trnK tRNA gene intron. Probably assists in splicing its own and other chloroplast group II introns. The protein is Maturase K of Austrocylindropuntia vestita (Cactus).